Consider the following 343-residue polypeptide: Holliday junction branch migration complex subunit RuvB (343 aa).

Residues 4–193 form a large ATPase domain (RuvB-L) region; the sequence is TDNLTAAQPQ…FGIVSRLEFY (190 aa). Residues Leu-32, Arg-33, Gly-74, Lys-77, Thr-78, Thr-79, 140–142, Arg-183, Tyr-193, and Arg-230 contribute to the ATP site; that span reads EDY. Position 78 (Thr-78) interacts with Mg(2+). The interval 194-264 is small ATPAse domain (RuvB-S); sequence ENRDLATIVS…IADAALSMLD (71 aa). Residues 267–343 form a head domain (RuvB-H) region; sequence VQGLDVMDRK…YLHFGLPVEK (77 aa). DNA-binding residues include Arg-322 and Arg-327.

The protein belongs to the RuvB family. Homohexamer. Forms an RuvA(8)-RuvB(12)-Holliday junction (HJ) complex. HJ DNA is sandwiched between 2 RuvA tetramers; dsDNA enters through RuvA and exits via RuvB. An RuvB hexamer assembles on each DNA strand where it exits the tetramer. Each RuvB hexamer is contacted by two RuvA subunits (via domain III) on 2 adjacent RuvB subunits; this complex drives branch migration. In the full resolvosome a probable DNA-RuvA(4)-RuvB(12)-RuvC(2) complex forms which resolves the HJ.

The protein resides in the cytoplasm. The catalysed reaction is ATP + H2O = ADP + phosphate + H(+). Its function is as follows. The RuvA-RuvB-RuvC complex processes Holliday junction (HJ) DNA during genetic recombination and DNA repair, while the RuvA-RuvB complex plays an important role in the rescue of blocked DNA replication forks via replication fork reversal (RFR). RuvA specifically binds to HJ cruciform DNA, conferring on it an open structure. The RuvB hexamer acts as an ATP-dependent pump, pulling dsDNA into and through the RuvAB complex. RuvB forms 2 homohexamers on either side of HJ DNA bound by 1 or 2 RuvA tetramers; 4 subunits per hexamer contact DNA at a time. Coordinated motions by a converter formed by DNA-disengaged RuvB subunits stimulates ATP hydrolysis and nucleotide exchange. Immobilization of the converter enables RuvB to convert the ATP-contained energy into a lever motion, pulling 2 nucleotides of DNA out of the RuvA tetramer per ATP hydrolyzed, thus driving DNA branch migration. The RuvB motors rotate together with the DNA substrate, which together with the progressing nucleotide cycle form the mechanistic basis for DNA recombination by continuous HJ branch migration. Branch migration allows RuvC to scan DNA until it finds its consensus sequence, where it cleaves and resolves cruciform DNA. The polypeptide is Holliday junction branch migration complex subunit RuvB (Neisseria meningitidis serogroup A / serotype 4A (strain DSM 15465 / Z2491)).